The primary structure comprises 232 residues: MEQGAEDIPVVYLHDIKRQYTQGEATLTILNGAKLALWAGQSVALVAPSGSGKSTLLHIAGLLEHPDEGEVYVSGAATTALTDAERTQIRRTDIGFVYQSHRLLPEFTALENVMMPQMIRGLKRSETVSRAKEILAYLGLADRITHRPSELSGGEQQRVAIARAVANAPRVLFADEPTGNLDPHTADHVFKALTQLVKATQVAMLIATHNMELAGRMDRRVSIEDGVIVELE.

In terms of domain architecture, ABC transporter spans 11–231; it reads VYLHDIKRQY…SIEDGVIVEL (221 aa). Residue 47-54 coordinates ATP; sequence APSGSGKS.

The protein belongs to the ABC transporter superfamily. Lipoprotein translocase (TC 3.A.1.125) family. In terms of assembly, the complex is composed of two ATP-binding proteins (LolD) and two transmembrane proteins (LolC and LolE).

It is found in the cell inner membrane. Part of the ABC transporter complex LolCDE involved in the translocation of mature outer membrane-directed lipoproteins, from the inner membrane to the periplasmic chaperone, LolA. Responsible for the formation of the LolA-lipoprotein complex in an ATP-dependent manner. The protein is Lipoprotein-releasing system ATP-binding protein LolD of Rhodopseudomonas palustris (strain BisB5).